Here is a 467-residue protein sequence, read N- to C-terminus: ATP synthase subunit beta (467 aa).

An ATP-binding site is contributed by 150-157; it reads GGAGVGKT.

The protein belongs to the ATPase alpha/beta chains family. As to quaternary structure, F-type ATPases have 2 components, CF(1) - the catalytic core - and CF(0) - the membrane proton channel. CF(1) has five subunits: alpha(3), beta(3), gamma(1), delta(1), epsilon(1). CF(0) has three main subunits: a(1), b(2) and c(9-12). The alpha and beta chains form an alternating ring which encloses part of the gamma chain. CF(1) is attached to CF(0) by a central stalk formed by the gamma and epsilon chains, while a peripheral stalk is formed by the delta and b chains.

It is found in the cell inner membrane. It catalyses the reaction ATP + H2O + 4 H(+)(in) = ADP + phosphate + 5 H(+)(out). Its function is as follows. Produces ATP from ADP in the presence of a proton gradient across the membrane. The catalytic sites are hosted primarily by the beta subunits. The chain is ATP synthase subunit beta from Aliivibrio fischeri (strain ATCC 700601 / ES114) (Vibrio fischeri).